Reading from the N-terminus, the 351-residue chain is UDP-3-O-acylglucosamine N-acyltransferase (351 aa).

Histidine 240 acts as the Proton acceptor in catalysis.

Belongs to the transferase hexapeptide repeat family. LpxD subfamily. Homotrimer.

The enzyme catalyses a UDP-3-O-[(3R)-3-hydroxyacyl]-alpha-D-glucosamine + a (3R)-hydroxyacyl-[ACP] = a UDP-2-N,3-O-bis[(3R)-3-hydroxyacyl]-alpha-D-glucosamine + holo-[ACP] + H(+). It participates in bacterial outer membrane biogenesis; LPS lipid A biosynthesis. Catalyzes the N-acylation of UDP-3-O-acylglucosamine using 3-hydroxyacyl-ACP as the acyl donor. Is involved in the biosynthesis of lipid A, a phosphorylated glycolipid that anchors the lipopolysaccharide to the outer membrane of the cell. This is UDP-3-O-acylglucosamine N-acyltransferase from Pseudomonas fluorescens (strain ATCC BAA-477 / NRRL B-23932 / Pf-5).